The chain runs to 738 residues: NAD(P)H-quinone oxidoreductase subunit 5, chloroplastic (738 aa).

The next 17 helical transmembrane spans lie at 9-29, 39-59, 89-109, 125-145, 147-167, 185-205, 224-244, 258-278, 280-300, 327-347, 396-416, 425-445, 544-564, 600-620, 667-687, 694-714, and 718-738; these read WIIP…LLLF, IWAF…VILS, IDPL…MVLI, FAYM…SNLI, IYIF…FWFT, GDFS…SFEF, FFLT…SAQF, TPIS…FLVA, LFPL…VGII, LGYI…FHLI, TSFL…CFWS, WLYS…TAFY, MLFP…IGIL, FLIN…IALF, IFYA…TYFF, GIVN…KYVG, and ISSY…ICLN.

The protein belongs to the complex I subunit 5 family. As to quaternary structure, NDH is composed of at least 16 different subunits, 5 of which are encoded in the nucleus.

The protein resides in the plastid. It is found in the chloroplast thylakoid membrane. It carries out the reaction a plastoquinone + NADH + (n+1) H(+)(in) = a plastoquinol + NAD(+) + n H(+)(out). The enzyme catalyses a plastoquinone + NADPH + (n+1) H(+)(in) = a plastoquinol + NADP(+) + n H(+)(out). In terms of biological role, NDH shuttles electrons from NAD(P)H:plastoquinone, via FMN and iron-sulfur (Fe-S) centers, to quinones in the photosynthetic chain and possibly in a chloroplast respiratory chain. The immediate electron acceptor for the enzyme in this species is believed to be plastoquinone. Couples the redox reaction to proton translocation, and thus conserves the redox energy in a proton gradient. This chain is NAD(P)H-quinone oxidoreductase subunit 5, chloroplastic (ndhF), found in Ranunculus macranthus (Large buttercup).